We begin with the raw amino-acid sequence, 101 residues long: NADH-quinone oxidoreductase subunit K (101 aa).

3 helical membrane-spanning segments follow: residues 4 to 24 (LSHYLTVAAILFTLGVLGIFI), 29 to 49 (IIVILMSVELILLAVNINLVA), and 65 to 85 (FVLTVAAAEAAIGLAILVVFF).

This sequence belongs to the complex I subunit 4L family. NDH-1 is composed of 14 different subunits. Subunits NuoA, H, J, K, L, M, N constitute the membrane sector of the complex.

The protein resides in the cell inner membrane. It carries out the reaction a quinone + NADH + 5 H(+)(in) = a quinol + NAD(+) + 4 H(+)(out). Its function is as follows. NDH-1 shuttles electrons from NADH, via FMN and iron-sulfur (Fe-S) centers, to quinones in the respiratory chain. The immediate electron acceptor for the enzyme in this species is believed to be ubiquinone. Couples the redox reaction to proton translocation (for every two electrons transferred, four hydrogen ions are translocated across the cytoplasmic membrane), and thus conserves the redox energy in a proton gradient. This is NADH-quinone oxidoreductase subunit K from Methylobacterium nodulans (strain LMG 21967 / CNCM I-2342 / ORS 2060).